The primary structure comprises 404 residues: uncharacterized protein (404 aa).

This sequence belongs to the lymphocryptovirus BTRF1 family.

This is an uncharacterized protein from Epstein-Barr virus (strain GD1) (HHV-4).